Reading from the N-terminus, the 347-residue chain is Gentisate 1,2 dioxygenase 1 (347 aa).

The 68-residue stretch at 96–163 (LQLILPGEVA…DSDKPMIWMD (68 aa)) folds into the Cupin type-2 domain.

This sequence belongs to the gentisate 1,2-dioxygenase family. As to quaternary structure, homotetramer. Requires Fe(2+) as cofactor.

The catalysed reaction is 2,5-dihydroxybenzoate + O2 = 3-maleylpyruvate + H(+). Completely inhibited by the presence of 5 mM Cu(2+). Partially inhibited with 5 mM Mn(2+), Zn(2+) or EDTA. In terms of biological role, involved in the degradation of gentisate. Catalyzes the conversion of gentisate (2,5-dihydroxybenzoate) to maleylpyruvate. Exhibits broad substrate specificities towards alkyl and halogenated gentisates. The protein is Gentisate 1,2 dioxygenase 1 of Aquipseudomonas alcaligenes (Pseudomonas alcaligenes).